Reading from the N-terminus, the 382-residue chain is (R,R)-butanediol dehydrogenase (382 aa).

C39 contributes to the Zn(2+) binding site. S63 bears the Phosphoserine mark. H73, C103, C120, C123, C131, and E173 together coordinate Zn(2+).

This sequence belongs to the zinc-containing alcohol dehydrogenase family. Homodimer. The cofactor is Zn(2+).

It is found in the cytoplasm. The enzyme catalyses (R,R)-butane-2,3-diol + NAD(+) = (R)-acetoin + NADH + H(+). In terms of biological role, NAD-dependent (R,R)-butanediol dehydrogenase which catalyzes oxidation of (R,R)-butane-2,3-diol to (3R)-acetoin, of meso-butanediol to (3S)-acetoin, and reduction of acetoin. Allows the use of 2,3-butanediol as an aerobic carbon source. This Saccharomyces cerevisiae (strain ATCC 204508 / S288c) (Baker's yeast) protein is (R,R)-butanediol dehydrogenase (BDH1).